A 137-amino-acid chain; its full sequence is uncharacterized protein (137 aa).

A run of 3 helical transmembrane segments spans residues 5–25 (ELLW…VLVI), 79–99 (IAAI…WGYY), and 109–129 (FALG…SILW).

The protein belongs to the MAPEG family.

The protein localises to the cell membrane. This is an uncharacterized protein from Synechocystis sp. (strain ATCC 27184 / PCC 6803 / Kazusa).